We begin with the raw amino-acid sequence, 123 residues long: Protein Wnt-3a (123 aa).

The O-palmitoleoyl serine moiety is linked to residue serine 1. Residues cysteine 89 and cysteine 104 are joined by a disulfide bond. A glycan (N-linked (GlcNAc...) asparagine) is linked at asparagine 90.

It belongs to the Wnt family. Disulfide bonds have critical and distinct roles in secretion and activity. Loss of each conserved cysteine results in high molecular weight oxidized Wnt oligomers, which are formed through inter-Wnt disulfide bonding. Post-translationally, palmitoleoylation is required for efficient binding to frizzled receptors. Depalmitoleoylation leads to Wnt signaling pathway inhibition.

The protein resides in the secreted. The protein localises to the extracellular space. It localises to the extracellular matrix. Its function is as follows. Ligand for members of the frizzled family of seven transmembrane receptors. Functions in the canonical Wnt signaling pathway that results in activation of transcription factors of the TCF/LEF family. Required for normal embryonic mesoderm development and formation of caudal somites. Required for normal morphogenesis of the developing neural tube. The sequence is that of Protein Wnt-3a (WNT-3A) from Plethodon jordani (Red-cheeked salamander).